Consider the following 282-residue polypeptide: Transcription repressor OFP18 (282 aa).

A disordered region spans residues methionine 1–alanine 85. Positions serine 15–serine 35 are enriched in low complexity. Positions histidine 36–alanine 47 are enriched in polar residues. A compositionally biased stretch (low complexity) spans serine 66–alanine 85. Residues leucine 139–asparagine 199 form the OVATE domain.

In terms of tissue distribution, expressed in roots and shoots.

It localises to the nucleus. Transcriptional repressor that regulates multiple aspects of plant growth and development through the regulation of BEL1-LIKE (BLH) and KNOX TALE (KNAT) homeodomain transcription factors. The polypeptide is Transcription repressor OFP18 (OFP18) (Arabidopsis thaliana (Mouse-ear cress)).